We begin with the raw amino-acid sequence, 351 residues long: GTPase Obg (351 aa).

The region spanning 1–159 (MKFLDQCKIY…RWVWLRLKLI (159 aa)) is the Obg domain. The OBG-type G domain maps to 160–327 (ADAGLVGLPN…MLFELLRHIR (168 aa)). GTP-binding positions include 166–173 (GLPNAGKS), 191–195 (FTTLT), 212–215 (DIPG), 279–282 (NKID), and 308–310 (SGA). 2 residues coordinate Mg(2+): Ser-173 and Thr-193.

Belongs to the TRAFAC class OBG-HflX-like GTPase superfamily. OBG GTPase family. In terms of assembly, monomer. The cofactor is Mg(2+).

It localises to the cytoplasm. In terms of biological role, an essential GTPase which binds GTP, GDP and possibly (p)ppGpp with moderate affinity, with high nucleotide exchange rates and a fairly low GTP hydrolysis rate. Plays a role in control of the cell cycle, stress response, ribosome biogenesis and in those bacteria that undergo differentiation, in morphogenesis control. This is GTPase Obg from Rhodospirillum centenum (strain ATCC 51521 / SW).